A 208-amino-acid polypeptide reads, in one-letter code: Probable nicotinate-nucleotide adenylyltransferase (208 aa).

This sequence belongs to the NadD family.

It catalyses the reaction nicotinate beta-D-ribonucleotide + ATP + H(+) = deamido-NAD(+) + diphosphate. It functions in the pathway cofactor biosynthesis; NAD(+) biosynthesis; deamido-NAD(+) from nicotinate D-ribonucleotide: step 1/1. In terms of biological role, catalyzes the reversible adenylation of nicotinate mononucleotide (NaMN) to nicotinic acid adenine dinucleotide (NaAD). The polypeptide is Probable nicotinate-nucleotide adenylyltransferase (Trichormus variabilis (strain ATCC 29413 / PCC 7937) (Anabaena variabilis)).